The chain runs to 616 residues: Proline--tRNA ligase (616 aa).

Belongs to the class-II aminoacyl-tRNA synthetase family. ProS type 1 subfamily. Homodimer.

It localises to the cytoplasm. The enzyme catalyses tRNA(Pro) + L-proline + ATP = L-prolyl-tRNA(Pro) + AMP + diphosphate. In terms of biological role, catalyzes the attachment of proline to tRNA(Pro) in a two-step reaction: proline is first activated by ATP to form Pro-AMP and then transferred to the acceptor end of tRNA(Pro). As ProRS can inadvertently accommodate and process non-cognate amino acids such as alanine and cysteine, to avoid such errors it has two additional distinct editing activities against alanine. One activity is designated as 'pretransfer' editing and involves the tRNA(Pro)-independent hydrolysis of activated Ala-AMP. The other activity is designated 'posttransfer' editing and involves deacylation of mischarged Ala-tRNA(Pro). The misacylated Cys-tRNA(Pro) is not edited by ProRS. In Lactococcus lactis subsp. lactis (strain IL1403) (Streptococcus lactis), this protein is Proline--tRNA ligase.